Reading from the N-terminus, the 449-residue chain is Glucose-6-phosphate isomerase (449 aa).

Residue Glu-290 is the Proton donor of the active site. Catalysis depends on residues His-311 and Lys-425.

It belongs to the GPI family.

The protein resides in the cytoplasm. The enzyme catalyses alpha-D-glucose 6-phosphate = beta-D-fructose 6-phosphate. Its pathway is carbohydrate biosynthesis; gluconeogenesis. It functions in the pathway carbohydrate degradation; glycolysis; D-glyceraldehyde 3-phosphate and glycerone phosphate from D-glucose: step 2/4. Catalyzes the reversible isomerization of glucose-6-phosphate to fructose-6-phosphate. The sequence is that of Glucose-6-phosphate isomerase from Clostridium tetani (strain Massachusetts / E88).